The following is a 633-amino-acid chain: MFYQQQFDVIVVGGGHAGTEAALAAARMGSKTLLLTHNVETLGQMSCNPAIGGIGKGHLVKEIDALGGSMAKAIDKGGIQFRTLNSSKGPAVRATRAQADRSLYRSAIRDIVEHQDNLTLFQQSCDDLIVENDQVTGVVTQMGLKFRAKSVVITVGTFLGGTIHIGMENYKGGRAGDPPSIALADRLRALPFRVSRLKTGTPARLDARTLDYSVMQEQLGDSPTPVFSFMGKREDHPRQIACYITHTNSKTHDIIRGGLDRSPMYTGVIEGIGPRYCPSIEDKINRFADKDSHQIFVEPEGLNSIEVYPNGISTSLPFDVQFELVRSIKGFENAHIIRPGYAIEYDFFDPRDLKQTLETKFIKGLFFAGQINGTTGYEEAGAQGLIAGANASLQCQGKDPLILRRDEAYMGVLIDDLATMGTKEPYRMFTSRAEYRLLLREDNADIRLTAKGHELGLVDEERWQAFNIKLEAIELERQRLRDTWVHPKHAAAEALNPLLKNALSKENTLEDLIRRPEMTYETLMNVTEFGPGITDPKAAEQVEIQIKYAGYIERQQDEIAKSRKNENTLIPLDFDYSQISGLSNEVVAKLSDAKPETLGLASRISGITPAAISLLLVYLKKHGLLRKTERKTA.

Residue 13–18 participates in FAD binding; that stretch reads GGGHAG. 273–287 lines the NAD(+) pocket; the sequence is GPRYCPSIEDKINRF.

This sequence belongs to the MnmG family. Homodimer. Heterotetramer of two MnmE and two MnmG subunits. FAD is required as a cofactor.

Its subcellular location is the cytoplasm. NAD-binding protein involved in the addition of a carboxymethylaminomethyl (cmnm) group at the wobble position (U34) of certain tRNAs, forming tRNA-cmnm(5)s(2)U34. This is tRNA uridine 5-carboxymethylaminomethyl modification enzyme MnmG from Pseudoalteromonas atlantica (strain T6c / ATCC BAA-1087).